Consider the following 38-residue polypeptide: Large ribosomal subunit protein bL36 (38 aa).

This sequence belongs to the bacterial ribosomal protein bL36 family.

The protein is Large ribosomal subunit protein bL36 of Anaeromyxobacter dehalogenans (strain 2CP-1 / ATCC BAA-258).